A 362-amino-acid polypeptide reads, in one-letter code: S-adenosylmethionine-dependent nucleotide dehydratase RSAD2 (362 aa).

Positions 49–71 are disordered; that stretch reads QQLQGKTEAGEPPRAQEDSHLPT. Residues 56 to 68 are compositionally biased toward basic and acidic residues; the sequence is EAGEPPRAQEDSH. The 221-residue stretch at 70-290 folds into the Radical SAM core domain; that stretch reads PTTPTSVNYH…LDRHKDVSCL (221 aa). Cys-84, Cys-88, and Cys-91 together coordinate [4Fe-4S] cluster. Position 198 is an N6-acetyllysine (Lys-198). Residue Lys-207 forms a Glycyl lysine isopeptide (Lys-Gly) (interchain with G-Cter in ubiquitin) linkage.

This sequence belongs to the radical SAM superfamily. RSAD2 family. As to quaternary structure, homodimer. Interacts with IRAK1 and TRAF6. Interacts with FPPS. Interacts with HADHB. Interacts (via C-terminus) with VAPA/VAP33 (via C-terminus). Requires [4Fe-4S] cluster as cofactor. Post-translationally, acetylated by HAT1. HAT1-mediated acetylation of Lys-198 in turn recruits UBE4A that stimulates RSAD2 polyubiquitination leading to proteasomal degradation. In terms of processing, 'Lys-6'-linked polyubiquitination at Lys-207 leads to RSAD2 protein degradation.

Its subcellular location is the endoplasmic reticulum membrane. It localises to the golgi apparatus. The protein resides in the endoplasmic reticulum. It is found in the lipid droplet. The protein localises to the mitochondrion. Its subcellular location is the mitochondrion inner membrane. It localises to the mitochondrion outer membrane. It catalyses the reaction CTP + AH2 + S-adenosyl-L-methionine = 3'-deoxy-3',4'-didehydro-CTP + 5'-deoxyadenosine + L-methionine + A + H2O + H(+). With respect to regulation, IRAK1 and TRAF6 synergistically activate RSAD2 increasing its activity with CTP as substrate about 10-fold. Functionally, interferon-inducible antiviral protein which plays a major role in the cell antiviral state induced by type I and type II interferon. Catalyzes the conversion of cytidine triphosphate (CTP) to 3'-deoxy-3',4'-didehydro-CTP (ddhCTP) via a SAM-dependent radical mechanism. In turn, ddhCTP acts as a chain terminator for the RNA-dependent RNA polymerases from multiple viruses and directly inhibits viral replication. Therefore, inhibits a wide range of DNA and RNA viruses. Also promotes TLR7 and TLR9-dependent production of IFN-beta production in plasmacytoid dendritic cells (pDCs) by facilitating 'Lys-63'-linked ubiquitination of IRAK1 by TRAF6. Plays a role in CD4+ T-cells activation and differentiation. Facilitates T-cell receptor (TCR)-mediated GATA3 activation and optimal T-helper 2 (Th2) cytokine production by modulating NFKB1 and JUNB activities. Can inhibit secretion of soluble proteins. The polypeptide is S-adenosylmethionine-dependent nucleotide dehydratase RSAD2 (Sus scrofa (Pig)).